Reading from the N-terminus, the 478-residue chain is Dynein regulatory complex subunit 4 (478 aa).

Basic residues predominate over residues 1–12; it reads MAPKRRGKKGKA. The tract at residues 1–32 is disordered; that stretch reads MAPKRRGKKGKAKGNAVVDGVAPEDMSKEQVE. Residues 1–114 form a regulates microtubule-binding region; the sequence is MAPKRRGKKG…LLYEHQNNLA (114 aa). 2 coiled-coil regions span residues 24–201 and 243–427; these read EDMS…DELD and NNLA…LARV. Residues 115–258 are microtubule-binding; the sequence is EVKTEGTVVM…NSLKEQMEDM (144 aa). Residues 357 to 478 form an interaction with SMO region; that stretch reads QQKTGFKNLV…GPAGLVGAPT (122 aa).

Belongs to the DRC4 family. As to quaternary structure, component of the nexin-dynein regulatory complex (N-DRC). Interacts with microtubules. Interacts with SMO. Interacts (via coiled-coil domains) with RAB3B (in GTP-bound form). Interacts with DRC1. Interacts with DRC7.

The protein resides in the cytoplasm. It localises to the cytoskeleton. The protein localises to the cell projection. It is found in the cilium. Its subcellular location is the flagellum. The protein resides in the cilium axoneme. It localises to the cilium basal body. The protein localises to the golgi apparatus. It is found in the flagellum axoneme. Component of the nexin-dynein regulatory complex (N-DRC), a key regulator of ciliary/flagellar motility which maintains the alignment and integrity of the distal axoneme and regulates microtubule sliding in motile axonemes. Plays an important role in the assembly of the N-DRC linker. Plays dual roles at both the primary (or non-motile) cilia to regulate hedgehog signaling and in motile cilia to coordinate cilia movement. Required for proper motile cilia functioning. Positively regulates ciliary smoothened (SMO)-dependent Hedgehog (Hh) signaling pathway by facilitating the trafficking of SMO into the cilium and the stimulation of SMO activity in a GRK2-dependent manner. The sequence is that of Dynein regulatory complex subunit 4 (Gas8) from Rattus norvegicus (Rat).